A 121-amino-acid chain; its full sequence is NAD(P)H-quinone oxidoreductase subunit 3, chloroplastic (121 aa).

Transmembrane regions (helical) follow at residues 10 to 30 (FWAF…VSNL), 65 to 85 (MFAL…PWAM), and 90 to 110 (LGII…IGLI).

The protein belongs to the complex I subunit 3 family. As to quaternary structure, NDH is composed of at least 16 different subunits, 5 of which are encoded in the nucleus.

The protein localises to the plastid. It localises to the chloroplast thylakoid membrane. The catalysed reaction is a plastoquinone + NADH + (n+1) H(+)(in) = a plastoquinol + NAD(+) + n H(+)(out). The enzyme catalyses a plastoquinone + NADPH + (n+1) H(+)(in) = a plastoquinol + NADP(+) + n H(+)(out). Its function is as follows. NDH shuttles electrons from NAD(P)H:plastoquinone, via FMN and iron-sulfur (Fe-S) centers, to quinones in the photosynthetic chain and possibly in a chloroplast respiratory chain. The immediate electron acceptor for the enzyme in this species is believed to be plastoquinone. Couples the redox reaction to proton translocation, and thus conserves the redox energy in a proton gradient. The protein is NAD(P)H-quinone oxidoreductase subunit 3, chloroplastic of Staurastrum punctulatum (Green alga).